A 388-amino-acid polypeptide reads, in one-letter code: Putative nickel insertion protein (388 aa).

This sequence belongs to the LarC family.

The chain is Putative nickel insertion protein from Geobacter sulfurreducens (strain ATCC 51573 / DSM 12127 / PCA).